A 407-amino-acid chain; its full sequence is RING-H2 finger protein ATL43 (407 aa).

A signal peptide spans 1–22 (MSSSSLILLFSTLSLFLNVSLA). A helical transmembrane segment spans residues 57–77 (GIAVVIAVLTAFFSLTFLLLL). The RING-type; atypical zinc finger occupies 146–188 (CAVCLARFEPTEVLRLLPKCKHAFHVECVDTWLDAHSTCPLCR).

Belongs to the RING-type zinc finger family. ATL subfamily.

The protein localises to the membrane. The catalysed reaction is S-ubiquitinyl-[E2 ubiquitin-conjugating enzyme]-L-cysteine + [acceptor protein]-L-lysine = [E2 ubiquitin-conjugating enzyme]-L-cysteine + N(6)-ubiquitinyl-[acceptor protein]-L-lysine.. Its pathway is protein modification; protein ubiquitination. The protein is RING-H2 finger protein ATL43 (ATL43) of Arabidopsis thaliana (Mouse-ear cress).